The primary structure comprises 643 residues: Pseudouridylate synthase PUS7L (643 aa).

Aspartate 284 acts as the Nucleophile in catalysis. A TRUD domain is found at glycine 370–lysine 597.

Belongs to the pseudouridine synthase TruD family.

The enzyme catalyses a uridine in mRNA = a pseudouridine in mRNA. Functionally, pseudouridine synthase that catalyzes pseudouridylation of mRNAs. This is Pseudouridylate synthase PUS7L (pus7l) from Danio rerio (Zebrafish).